The primary structure comprises 351 residues: Dihydroorotate dehydrogenase (quinone) (351 aa).

FMN-binding positions include 61-65 (AGLDK) and T85. K65 contacts substrate. Substrate is bound at residue 110 to 114 (NRMGF). FMN contacts are provided by N139 and N172. N172 serves as a coordination point for substrate. S175 serves as the catalytic Nucleophile. Residue N177 participates in substrate binding. 2 residues coordinate FMN: K217 and T245. 246-247 (NT) lines the substrate pocket. FMN-binding positions include G268, G297, and 318–319 (YT).

Belongs to the dihydroorotate dehydrogenase family. Type 2 subfamily. In terms of assembly, monomer. The cofactor is FMN.

It localises to the cell membrane. It catalyses the reaction (S)-dihydroorotate + a quinone = orotate + a quinol. The protein operates within pyrimidine metabolism; UMP biosynthesis via de novo pathway; orotate from (S)-dihydroorotate (quinone route): step 1/1. Its function is as follows. Catalyzes the conversion of dihydroorotate to orotate with quinone as electron acceptor. The polypeptide is Dihydroorotate dehydrogenase (quinone) (Xylella fastidiosa (strain M12)).